The primary structure comprises 460 residues: Cyclin-A1-1 (460 aa).

Disordered regions lie at residues 1–52 (MSNI…ITNQ) and 95–126 (PHKVASSPSKSDDGSVSMDETRSSSDSYKSPQ). Composition is skewed to low complexity over residues 10–19 (SSFSSSTKSS) and 100–111 (SSPSKSDDGSVS).

It belongs to the cyclin family. Cyclin AB subfamily. As to quaternary structure, interacts with FZR2/CCS52A1, FZR1/CCS52A2 and FZR3/CCS52B.

This is Cyclin-A1-1 (CYCA1-1) from Arabidopsis thaliana (Mouse-ear cress).